The primary structure comprises 184 residues: Deoxyuridine 5'-triphosphate nucleotidohydrolase (184 aa).

The segment covering 1–16 has biased composition (polar residues); sequence MPHTQTDAHQNNQENF. A disordered region spans residues 1–25; that stretch reads MPHTQTDAHQNNQENFSSSLISSRP. Residues 96–98, Asn109, 113–115, and Lys123 each bind substrate; these read RSG and TID. A disordered region spans residues 165 to 184; the sequence is STKNTVGNRGAGGFGSTGHD. Residues 173–184 show a composition bias toward gly residues; it reads RGAGGFGSTGHD.

This sequence belongs to the dUTPase family. The cofactor is Mg(2+).

The enzyme catalyses dUTP + H2O = dUMP + diphosphate + H(+). It participates in pyrimidine metabolism; dUMP biosynthesis; dUMP from dCTP (dUTP route): step 2/2. This enzyme is involved in nucleotide metabolism: it produces dUMP, the immediate precursor of thymidine nucleotides and it decreases the intracellular concentration of dUTP so that uracil cannot be incorporated into DNA. The sequence is that of Deoxyuridine 5'-triphosphate nucleotidohydrolase from Bartonella henselae (strain ATCC 49882 / DSM 28221 / CCUG 30454 / Houston 1) (Rochalimaea henselae).